A 284-amino-acid chain; its full sequence is uncharacterized protein (284 aa).

N-linked (GlcNAc...) asparagine; by host glycosylation is found at Asn-79, Asn-102, Asn-111, Asn-147, Asn-162, Asn-174, Asn-196, Asn-211, Asn-228, and Asn-234. Residues 239–259 form a helical membrane-spanning segment; sequence AFTYGSWGVAMLLFAAVMVLV.

The protein belongs to the RL11 family.

It localises to the membrane. This is an uncharacterized protein from Human cytomegalovirus (strain AD169) (HHV-5).